Consider the following 26-residue polypeptide: Potassium channel toxin alpha-KTx6 OcyKTx1 (26 aa).

An intrachain disulfide couples cysteine 3 to cysteine 24.

It belongs to the short scorpion toxin superfamily. Potassium channel inhibitor family. Alpha-KTx 06 subfamily. As to expression, expressed by the venom gland.

Its subcellular location is the secreted. Functionally, blocks voltage-gated potassium channels. The protein is Potassium channel toxin alpha-KTx6 OcyKTx1 of Opisthacanthus cayaporum (South American scorpion).